The following is a 30-amino-acid chain: Dermaseptin-S3 (30 aa).

This sequence belongs to the frog skin active peptide (FSAP) family. Dermaseptin subfamily. As to quaternary structure, monomer and oligomer. Forms aggregates in aqueous environments. In terms of tissue distribution, expressed by the skin glands.

The protein localises to the secreted. Potent antimicrobial peptide with activity against bacteria and protozoa. Also has activity against fungi. Probably acts by disturbing membrane functions with its amphipathic structure. Binds to healthy erythrocytes (this binding is receptor independent), but has very weak hemolytic activity. Does not bind to P.falciparum infected erythrocytes, but accumulates within the parasite. Kills the parasite, but has no hemolytic activity on the host cell. The polypeptide is Dermaseptin-S3 (Phyllomedusa sauvagei (Sauvage's leaf frog)).